The sequence spans 208 residues: Uracil phosphoribosyltransferase (208 aa).

5-phospho-alpha-D-ribose 1-diphosphate contacts are provided by residues Arg78, Arg103, and 130 to 138; that span reads DPMLATGGS. Uracil-binding positions include Ile193 and 198 to 200; that span reads GDA. Asp199 provides a ligand contact to 5-phospho-alpha-D-ribose 1-diphosphate.

It belongs to the UPRTase family. Mg(2+) is required as a cofactor.

The enzyme catalyses UMP + diphosphate = 5-phospho-alpha-D-ribose 1-diphosphate + uracil. It functions in the pathway pyrimidine metabolism; UMP biosynthesis via salvage pathway; UMP from uracil: step 1/1. Allosterically activated by GTP. Functionally, catalyzes the conversion of uracil and 5-phospho-alpha-D-ribose 1-diphosphate (PRPP) to UMP and diphosphate. This chain is Uracil phosphoribosyltransferase, found in Tolumonas auensis (strain DSM 9187 / NBRC 110442 / TA 4).